The sequence spans 301 residues: Oxygen-dependent coproporphyrinogen-III oxidase (301 aa).

Ser-92 is a substrate binding site. A divalent metal cation contacts are provided by His-96 and His-106. The Proton donor role is filled by His-106. 108–110 (NVR) is a binding site for substrate. Positions 145 and 175 each coordinate a divalent metal cation. The important for dimerization stretch occupies residues 240–275 (YVEFNLVWDRGTLFGLQTGGRTESILMSMPPLVRWE). 258-260 (GGR) serves as a coordination point for substrate.

Belongs to the aerobic coproporphyrinogen-III oxidase family. As to quaternary structure, homodimer. It depends on a divalent metal cation as a cofactor.

It localises to the cytoplasm. It carries out the reaction coproporphyrinogen III + O2 + 2 H(+) = protoporphyrinogen IX + 2 CO2 + 2 H2O. It functions in the pathway porphyrin-containing compound metabolism; protoporphyrin-IX biosynthesis; protoporphyrinogen-IX from coproporphyrinogen-III (O2 route): step 1/1. Involved in the heme biosynthesis. Catalyzes the aerobic oxidative decarboxylation of propionate groups of rings A and B of coproporphyrinogen-III to yield the vinyl groups in protoporphyrinogen-IX. The protein is Oxygen-dependent coproporphyrinogen-III oxidase of Cronobacter sakazakii (strain ATCC BAA-894) (Enterobacter sakazakii).